A 354-amino-acid polypeptide reads, in one-letter code: UDP-N-acetylglucosamine--N-acetylmuramyl-(pentapeptide) pyrophosphoryl-undecaprenol N-acetylglucosamine transferase (354 aa).

Residues 13–15 (SGG), asparagine 125, serine 189, isoleucine 242, 261–266 (ALTVSE), and glutamine 286 contribute to the UDP-N-acetyl-alpha-D-glucosamine site.

It belongs to the glycosyltransferase 28 family. MurG subfamily.

It localises to the cell inner membrane. The enzyme catalyses di-trans,octa-cis-undecaprenyl diphospho-N-acetyl-alpha-D-muramoyl-L-alanyl-D-glutamyl-meso-2,6-diaminopimeloyl-D-alanyl-D-alanine + UDP-N-acetyl-alpha-D-glucosamine = di-trans,octa-cis-undecaprenyl diphospho-[N-acetyl-alpha-D-glucosaminyl-(1-&gt;4)]-N-acetyl-alpha-D-muramoyl-L-alanyl-D-glutamyl-meso-2,6-diaminopimeloyl-D-alanyl-D-alanine + UDP + H(+). The protein operates within cell wall biogenesis; peptidoglycan biosynthesis. In terms of biological role, cell wall formation. Catalyzes the transfer of a GlcNAc subunit on undecaprenyl-pyrophosphoryl-MurNAc-pentapeptide (lipid intermediate I) to form undecaprenyl-pyrophosphoryl-MurNAc-(pentapeptide)GlcNAc (lipid intermediate II). The sequence is that of UDP-N-acetylglucosamine--N-acetylmuramyl-(pentapeptide) pyrophosphoryl-undecaprenol N-acetylglucosamine transferase from Buchnera aphidicola subsp. Acyrthosiphon pisum (strain APS) (Acyrthosiphon pisum symbiotic bacterium).